We begin with the raw amino-acid sequence, 424 residues long: Formyl-CoA:oxalate CoA-transferase (424 aa).

Residues 17 to 18 (QS), Arg-38, 96 to 98 (NFA), Arg-104, and 136 to 139 (KVYE) each bind CoA. Asp-168 serves as the catalytic Nucleophile. 247–249 (GGQ) is a binding site for substrate.

This sequence belongs to the CoA-transferase III family. Frc subfamily. In terms of assembly, homodimer.

It catalyses the reaction formyl-CoA + oxalate = oxalyl-CoA + formate. The protein operates within metabolic intermediate degradation; oxalate degradation; CO(2) and formate from oxalate: step 1/2. Its function is as follows. Involved in the catabolism of oxalate and in the adapatation to low pH via the induction of the oxalate-dependent acid tolerance response (ATR). Catalyzes the transfer of the CoA moiety from formyl-CoA to oxalate. The polypeptide is Formyl-CoA:oxalate CoA-transferase (Afipia carboxidovorans (strain ATCC 49405 / DSM 1227 / KCTC 32145 / OM5) (Oligotropha carboxidovorans)).